Reading from the N-terminus, the 164-residue chain is V-type proton ATPase subunit c' (164 aa).

At 1–15 the chain is on the lumenal side; sequence MTDDLVNEYAPAFAP. The helical transmembrane segment at 16–36 threads the bilayer; sequence FFGFAGCAAAMILSSLGAAIG. The Cytoplasmic segment spans residues 37-58; sequence TAKSGIGISGIGTFRPELIMKS. A helical membrane pass occupies residues 59–79; sequence LIPVVMSGILAVYGLVVAVLV. Residues 80 to 97 lie on the Lumenal side of the membrane; the sequence is AGGLSPTEEYTLFNGFMH. Residues 98–118 traverse the membrane as a helical segment; it reads LAAGLCVGFACLSSGYAIGIV. The Cytoplasmic portion of the chain corresponds to 119–135; sequence GDVGVRKFMHQPRLFVG. Residues 136–156 traverse the membrane as a helical segment; sequence IVLILIFAEVLGLYGMIIALI. The Lumenal portion of the chain corresponds to 157–164; that stretch reads LNTRGSGN.

It belongs to the V-ATPase proteolipid subunit family. In terms of assembly, V-ATPase is a heteromultimeric enzyme composed of a peripheral catalytic V1 complex (components A to H) attached to an integral membrane V0 proton pore complex (components: a, c, c', c'', d, e, f and VOA1). The decameric c-ring forms the proton-conducting pore, and is composed of eight proteolipid subunits c, one subunit c' and one subunit c''.

It is found in the vacuole membrane. Functionally, proton-conducting pore forming subunit of the V0 complex of vacuolar(H+)-ATPase (V-ATPase), a multisubunit enzyme composed of a peripheral complex (V1) that hydrolyzes ATP and a membrane integral complex (V0) that translocates protons. V-ATPase is responsible for acidifying and maintaining the pH of intracellular compartments. This is V-type proton ATPase subunit c' (VMA11) from Eremothecium gossypii (strain ATCC 10895 / CBS 109.51 / FGSC 9923 / NRRL Y-1056) (Yeast).